The following is a 104-amino-acid chain: MIRKAFVMQVNPDAHEEYQRRHNPIWPELAAVLKSHGAHNYAIYLDKARNLLFATVEIESEERWNAVASTDVCQRWWKYMTDVMPANPDNSPVSSELQEVFYLP.

Position 18 (tyrosine 18) interacts with substrate. The active-site Proton donor is the histidine 22. Substrate contacts are provided by residues tyrosine 41 and tryptophan 76–tryptophan 77.

The protein belongs to the rhamnose mutarotase family. In terms of assembly, homodimer.

The protein localises to the cytoplasm. It catalyses the reaction alpha-L-rhamnose = beta-L-rhamnose. The protein operates within carbohydrate metabolism; L-rhamnose metabolism. Functionally, involved in the anomeric conversion of L-rhamnose. The protein is L-rhamnose mutarotase of Escherichia coli O8 (strain IAI1).